Reading from the N-terminus, the 57-residue chain is Large ribosomal subunit protein bL32c (57 aa).

It belongs to the bacterial ribosomal protein bL32 family.

The protein resides in the plastid. It is found in the chloroplast. This chain is Large ribosomal subunit protein bL32c, found in Acorus calamus (Sweet flag).